Here is a 179-residue protein sequence, read N- to C-terminus: MSRIGKMPIPLSNQAKIEITDTDLTVTGPKGKLHQALTPQVIITQEDGVVTVQRIDDSKKAKAMHGLYRVLISNMVEGVTNGFTRKLEIAGVGYRAELKNDFLALTLGYSHMIYFKAPDEITIQVPDQTTILVTGIDKALVGQVAAKIRSFRKPEPYRGKGIKYEGEVIRRKEGKAAGK.

It belongs to the universal ribosomal protein uL6 family. Part of the 50S ribosomal subunit.

Its function is as follows. This protein binds to the 23S rRNA, and is important in its secondary structure. It is located near the subunit interface in the base of the L7/L12 stalk, and near the tRNA binding site of the peptidyltransferase center. The chain is Large ribosomal subunit protein uL6 from Chlorobium phaeobacteroides (strain DSM 266 / SMG 266 / 2430).